Consider the following 109-residue polypeptide: uncharacterized protein (109 aa).

This is an uncharacterized protein from Microplitis demolitor bracovirus (isolate Webb) (MdBV).